We begin with the raw amino-acid sequence, 184 residues long: uncharacterized protein (184 aa).

The 4Fe-4S domain occupies 72 to 135 (RKSQAILLIG…GIALGSAVKV (64 aa)). Cysteine 92, cysteine 95, cysteine 100, and cysteine 118 together coordinate [4Fe-4S] cluster.

Requires [4Fe-4S] cluster as cofactor.

This is an uncharacterized protein from Archaeoglobus fulgidus (strain ATCC 49558 / DSM 4304 / JCM 9628 / NBRC 100126 / VC-16).